We begin with the raw amino-acid sequence, 217 residues long: ATP phosphoribosyltransferase (217 aa).

The protein belongs to the ATP phosphoribosyltransferase family. Short subfamily. In terms of assembly, heteromultimer composed of HisG and HisZ subunits.

Its subcellular location is the cytoplasm. The enzyme catalyses 1-(5-phospho-beta-D-ribosyl)-ATP + diphosphate = 5-phospho-alpha-D-ribose 1-diphosphate + ATP. It functions in the pathway amino-acid biosynthesis; L-histidine biosynthesis; L-histidine from 5-phospho-alpha-D-ribose 1-diphosphate: step 1/9. Functionally, catalyzes the condensation of ATP and 5-phosphoribose 1-diphosphate to form N'-(5'-phosphoribosyl)-ATP (PR-ATP). Has a crucial role in the pathway because the rate of histidine biosynthesis seems to be controlled primarily by regulation of HisG enzymatic activity. This chain is ATP phosphoribosyltransferase, found in Burkholderia multivorans (strain ATCC 17616 / 249).